The primary structure comprises 310 residues: Thymidine kinase (310 aa).

17–24 is an ATP binding site; it reads GPFGIGKT. Glu-45 serves as the catalytic Proton acceptor. Substrate is bound at residue Gln-86. Arg-176 lines the ATP pocket. Residue Arg-182 participates in substrate binding.

Belongs to the herpesviridae thymidine kinase family. In terms of assembly, homodimer.

The enzyme catalyses thymidine + ATP = dTMP + ADP + H(+). Functionally, catalyzes the transfer of the gamma-phospho group of ATP to thymidine to generate dTMP in the salvage pathway of pyrimidine synthesis. The dTMP serves as a substrate for DNA polymerase during viral DNA replication. Allows the virus to be reactivated and to grow in non-proliferative cells lacking a high concentration of phosphorylated nucleic acid precursors. This is Thymidine kinase from Gallus gallus (Chicken).